The sequence spans 21 residues: Mast cell protease 3 (21 aa).

In terms of domain architecture, Peptidase S1 spans 1–21; sequence IIGGVESRPHSRPYMATLEIT. A disordered region spans residues 1–21; the sequence is IIGGVESRPHSRPYMATLEIT.

This sequence belongs to the peptidase S1 family. Granzyme subfamily.

Its function is as follows. Thrombin inactivating protease. Displays chymotrypsin-like substrate specificity. In Mus musculus (Mouse), this protein is Mast cell protease 3 (Mcpt3).